The sequence spans 524 residues: Zinc finger CCCH-type with G patch domain-containing protein (524 aa).

Residues 105 to 142 are disordered; the sequence is SEESQPLGSNDETSTCSKGSEEEEEEEEEEEDNTSGMK. Residues 106 to 122 show a composition bias toward polar residues; that stretch reads EESQPLGSNDETSTCSK. Positions 125–137 are enriched in acidic residues; the sequence is EEEEEEEEEEEDN. The segment at 184–210 adopts a C3H1-type zinc-finger fold; the sequence is KAMKPCPFFLDGKCLFNDNCRFSHGQV. Positions 279 to 298 are disordered; sequence RGSDSSSSSSSDEEEDGAAE. Residues 326 to 372 enclose the G-patch domain; sequence TRGIGSKLLVRMGYEFGKGLGRNAEGRVEPIQAVVLPKGKSLDQCME. 2 disordered regions span residues 375–402 and 500–524; these read QRKK…GGAK and GLQQ…MTEF. Residues 376 to 393 show a composition bias toward basic residues; it reads RKKAGGKHKHKTSKRRPK.

It localises to the nucleus. Transcription repressor that specifically binds the 5'-GGAG[GA]A[GA]A-3' consensus sequence. Represses transcription by recruiting the chromatin multiprotein complex NuRD to target promoters. Negatively regulates expression of EGFR, a gene involved in cell proliferation, survival and migration. The sequence is that of Zinc finger CCCH-type with G patch domain-containing protein (zgpat) from Xenopus laevis (African clawed frog).